We begin with the raw amino-acid sequence, 304 residues long: MAPELIQIDLEPRKPAPKPSWLRAKAPMGENYHDLKKLARGMNLHTVCESAQCPNIGECWNHKTATFMLLGNLCTRRCGFCAVPKGRPEPIDFDEPRRVAEAVATLGLNFAVVTSVNRDDDNVGAAQVFAQTIEQIREQKPGCRVEVLIPDFQGNDESLRIVLAAKPEILNHNTETVPRLYRAVRSGARYERTLNLLRRAKEINPAQVTKTGVMVGLGETTEELLHVYRDLARQNVDILTIGQYLRPSKDHAPMTRYYTPEEFLFMKEEAMKMGFRHVESGPLVRSSYHAHEQANSTKQPLVTI.

A disordered region spans residues 1–21 (MAPELIQIDLEPRKPAPKPSW). Residues C48, C53, C59, C74, C78, C81, and S287 each contribute to the [4Fe-4S] cluster site. The Radical SAM core domain occupies 60–276 (WNHKTATFML…KEEAMKMGFR (217 aa)).

It belongs to the radical SAM superfamily. Lipoyl synthase family. The cofactor is [4Fe-4S] cluster.

The protein resides in the cytoplasm. The catalysed reaction is [[Fe-S] cluster scaffold protein carrying a second [4Fe-4S](2+) cluster] + N(6)-octanoyl-L-lysyl-[protein] + 2 oxidized [2Fe-2S]-[ferredoxin] + 2 S-adenosyl-L-methionine + 4 H(+) = [[Fe-S] cluster scaffold protein] + N(6)-[(R)-dihydrolipoyl]-L-lysyl-[protein] + 4 Fe(3+) + 2 hydrogen sulfide + 2 5'-deoxyadenosine + 2 L-methionine + 2 reduced [2Fe-2S]-[ferredoxin]. It participates in protein modification; protein lipoylation via endogenous pathway; protein N(6)-(lipoyl)lysine from octanoyl-[acyl-carrier-protein]: step 2/2. Functionally, catalyzes the radical-mediated insertion of two sulfur atoms into the C-6 and C-8 positions of the octanoyl moiety bound to the lipoyl domains of lipoate-dependent enzymes, thereby converting the octanoylated domains into lipoylated derivatives. The chain is Lipoyl synthase from Koribacter versatilis (strain Ellin345).